Here is a 213-residue protein sequence, read N- to C-terminus: Glutathione S-transferase APIC (213 aa).

The GST N-terminal domain occupies 1–82; it reads MAIKVHGSPM…YIAHVYADNG (82 aa). Residues Ser-11, 12–13, 40–41, 53–54, and 66–67 contribute to the glutathione site; these read TA, HK, QV, and ES. Residues 89-213 form the GST C-terminal domain; that stretch reads DPKKMPIMSV…WVKGLEKLQK (125 aa).

This sequence belongs to the GST superfamily. Phi family.

The enzyme catalyses RX + glutathione = an S-substituted glutathione + a halide anion + H(+). Its function is as follows. Conjugation of reduced glutathione to a wide number of exogenous and endogenous hydrophobic electrophiles. This chain is Glutathione S-transferase APIC, found in Nicotiana tabacum (Common tobacco).